A 249-amino-acid chain; its full sequence is Probable transcriptional regulatory protein Rru_A1086 (249 aa).

This sequence belongs to the TACO1 family.

The protein resides in the cytoplasm. The chain is Probable transcriptional regulatory protein Rru_A1086 from Rhodospirillum rubrum (strain ATCC 11170 / ATH 1.1.1 / DSM 467 / LMG 4362 / NCIMB 8255 / S1).